The following is a 704-amino-acid chain: Tryptophan synthase (704 aa).

The segment at 1–292 (MEAIKKVFEQ…QLTPNAETAK (292 aa)) is tryptophan synthase alpha chain. Residues E49 and D60 each act as proton acceptor in the active site. The tryptophan synthase beta chain stretch occupies residues 293–704 (GVENILPARF…HVSSNAIPSK (412 aa)). The residue at position 380 (K380) is an N6-(pyridoxal phosphate)lysine.

This sequence in the N-terminal section; belongs to the TrpA family. In the C-terminal section; belongs to the TrpB family. Pyridoxal 5'-phosphate is required as a cofactor.

The catalysed reaction is (1S,2R)-1-C-(indol-3-yl)glycerol 3-phosphate + L-serine = D-glyceraldehyde 3-phosphate + L-tryptophan + H2O. It functions in the pathway amino-acid biosynthesis; L-tryptophan biosynthesis; L-tryptophan from chorismate: step 5/5. The polypeptide is Tryptophan synthase (TRP-1) (Coprinopsis cinerea (strain Okayama-7 / 130 / ATCC MYA-4618 / FGSC 9003) (Inky cap fungus)).